The chain runs to 194 residues: Prostaglandin-H2 D-isomerase (194 aa).

The first 24 residues, 1–24 (MAASHTLWMGLVLLGVLGVLQTRA), serve as a signal peptide directing secretion. Glutamine 25 carries the post-translational modification Pyrrolidone carboxylic acid. A glycan (N-linked (GlcNAc...) asparagine) is linked at asparagine 51. Cysteine 65 serves as the catalytic Nucleophile. Asparagine 78 carries an N-linked (GlcNAc...) asparagine glycan. Cysteine 89 and cysteine 189 form a disulfide bridge.

This sequence belongs to the calycin superfamily. Lipocalin family. Monomer. In the male reproductive system, it is expressed in the testis and epididymis, and is secreted into the seminal fluid.

It localises to the rough endoplasmic reticulum. It is found in the nucleus membrane. Its subcellular location is the golgi apparatus. The protein resides in the cytoplasm. The protein localises to the perinuclear region. It localises to the secreted. The catalysed reaction is prostaglandin H2 = prostaglandin D2. Catalyzes the conversion of PGH2 to PGD2, a prostaglandin involved in smooth muscle contraction/relaxation and a potent inhibitor of platelet aggregation. Involved in a variety of CNS functions, such as sedation, NREM sleep and PGE2-induced allodynia, and may have an anti-apoptotic role in oligodendrocytes. Binds small non-substrate lipophilic molecules, including biliverdin, bilirubin, retinal, retinoic acid and thyroid hormone, and may act as a scavenger for harmful hydrophobic molecules and as a secretory retinoid and thyroid hormone transporter. Possibly involved in development and maintenance of the blood-brain, blood-retina, blood-aqueous humor and blood-testis barrier. It is likely to play important roles in both maturation and maintenance of the central nervous system and male reproductive system. Involved in PLA2G3-dependent maturation of mast cells. PLA2G3 is secreted by immature mast cells and acts on nearby fibroblasts upstream to PTDGS to synthesize PGD2, which in turn promotes mast cell maturation and degranulation via PTGDR. This Equus caballus (Horse) protein is Prostaglandin-H2 D-isomerase (PTGDS).